The sequence spans 446 residues: N-succinylarginine dihydrolase (446 aa).

Substrate contacts are provided by residues 19–28 (AGLSFGNVAS), Asn-110, and 137–138 (HR). Glu-174 is an active-site residue. Arg-213 provides a ligand contact to substrate. His-249 is an active-site residue. Positions 251 and 364 each coordinate substrate. Catalysis depends on Cys-370, which acts as the Nucleophile.

Belongs to the succinylarginine dihydrolase family. Homodimer.

It carries out the reaction N(2)-succinyl-L-arginine + 2 H2O + 2 H(+) = N(2)-succinyl-L-ornithine + 2 NH4(+) + CO2. The protein operates within amino-acid degradation; L-arginine degradation via AST pathway; L-glutamate and succinate from L-arginine: step 2/5. Functionally, catalyzes the hydrolysis of N(2)-succinylarginine into N(2)-succinylornithine, ammonia and CO(2). This Burkholderia cenocepacia (strain HI2424) protein is N-succinylarginine dihydrolase.